Consider the following 282-residue polypeptide: MSEPNEVIEEFETYLDLEGKSPHTIRMYTYYVRRYLEWGGDLNAHSALRFLAHLRKNGYSNRSLNLVVQALRAYFRFEGLDDEAERLKPPKVPRSLPKALTREEVKRLLSVIPPTRKRDRLIVLLLYGAGLRVSELCNLKKDDVDLDRGLIVVRGGKGAKDRVVPIPKYLADEIRAYLESRSDESEYLLVEDRRRRKDKLSTRNVWYLLKRYGQKAGVEVTPHKLRHSFATHLLEEGVDIRAIQELLGHSNLSTTQIYTKVTVEHLRKAQEKAKLIEKLMGE.

A Core-binding (CB) domain is found at 2 to 79 (SEPNEVIEEF…ALRAYFRFEG (78 aa)). The Tyr recombinase domain occupies 95–271 (SLPKALTREE…TVEHLRKAQE (177 aa)). Active-site residues include R132, K157, H223, R226, and H249. The active-site O-(3'-phospho-DNA)-tyrosine intermediate is the Y258.

This sequence belongs to the 'phage' integrase family. XerA subfamily.

Its subcellular location is the cytoplasm. Functionally, site-specific tyrosine recombinase, which acts by catalyzing the cutting and rejoining of the recombining DNA molecules. The chain is Tyrosine recombinase XerA from Thermococcus kodakarensis (strain ATCC BAA-918 / JCM 12380 / KOD1) (Pyrococcus kodakaraensis (strain KOD1)).